Reading from the N-terminus, the 269-residue chain is Glutamate racemase (269 aa).

Substrate is bound by residues 14–15 and 46–47; these read DS and YS. Cysteine 78 functions as the Proton donor/acceptor in the catalytic mechanism. 79 to 80 lines the substrate pocket; it reads NT. The active-site Proton donor/acceptor is cysteine 189. 190 to 191 contributes to the substrate binding site; that stretch reads TH.

This sequence belongs to the aspartate/glutamate racemases family.

It catalyses the reaction L-glutamate = D-glutamate. It functions in the pathway cell wall biogenesis; peptidoglycan biosynthesis. Its function is as follows. Provides the (R)-glutamate required for cell wall biosynthesis. This is Glutamate racemase from Haemophilus influenzae (strain 86-028NP).